Reading from the N-terminus, the 146-residue chain is Large ribosomal subunit protein bL19 (146 aa).

This sequence belongs to the bacterial ribosomal protein bL19 family.

This protein is located at the 30S-50S ribosomal subunit interface and may play a role in the structure and function of the aminoacyl-tRNA binding site. The protein is Large ribosomal subunit protein bL19 of Bartonella quintana (strain Toulouse) (Rochalimaea quintana).